Here is a 278-residue protein sequence, read N- to C-terminus: MVNYKEKLDEAIHLTQQKGFEQTRAEWLMLDVFQWTRTDFVVHMHDDMPKAMIMKFDLALQRMLLGEPIQYIVGFASFYGRTFDVNSNCLIPRPETEEVMLHFLQQLEDDATIVDIGTGSGVLAITLKCEKPDLNVIATDISLEAMNMARNNAEKHQSQIQFLTGDALKPLINEGIKLNGLISNPPYIDEKDMVTMSPTVTRFEPHQALFADNHGYAIYESIIEDLPHVMEKGSPVVFEIGYNQGEALKSIILNKFPDKKIDIIKDINGHDRIVSFKW.

Residues 117 to 121 (GTGSG), D140, and N184 contribute to the S-adenosyl-L-methionine site. A substrate-binding site is contributed by 184-187 (NPPY).

It belongs to the protein N5-glutamine methyltransferase family. PrmC subfamily.

It catalyses the reaction L-glutaminyl-[peptide chain release factor] + S-adenosyl-L-methionine = N(5)-methyl-L-glutaminyl-[peptide chain release factor] + S-adenosyl-L-homocysteine + H(+). In terms of biological role, methylates the class 1 translation termination release factors RF1/PrfA and RF2/PrfB on the glutamine residue of the universally conserved GGQ motif. This Staphylococcus aureus (strain NCTC 8325 / PS 47) protein is Release factor glutamine methyltransferase.